We begin with the raw amino-acid sequence, 199 residues long: Holliday junction branch migration complex subunit RuvA (199 aa).

The domain I stretch occupies residues 1 to 64 (MIGRISGLLL…EDGHFLYGFA (64 aa)). The segment at 65 to 143 (TDEERTAFRQ…KALPQVAGAR (79 aa)) is domain II. The interval 144-154 (LAAVAGGAPDA) is flexible linker. A domain III region spans residues 154–199 (AKSDILNALLALGYNEKEALGAMKGLAEDTGVSDGIRQALKLLSKA).

Belongs to the RuvA family. In terms of assembly, homotetramer. Forms an RuvA(8)-RuvB(12)-Holliday junction (HJ) complex. HJ DNA is sandwiched between 2 RuvA tetramers; dsDNA enters through RuvA and exits via RuvB. An RuvB hexamer assembles on each DNA strand where it exits the tetramer. Each RuvB hexamer is contacted by two RuvA subunits (via domain III) on 2 adjacent RuvB subunits; this complex drives branch migration. In the full resolvosome a probable DNA-RuvA(4)-RuvB(12)-RuvC(2) complex forms which resolves the HJ.

The protein resides in the cytoplasm. Its function is as follows. The RuvA-RuvB-RuvC complex processes Holliday junction (HJ) DNA during genetic recombination and DNA repair, while the RuvA-RuvB complex plays an important role in the rescue of blocked DNA replication forks via replication fork reversal (RFR). RuvA specifically binds to HJ cruciform DNA, conferring on it an open structure. The RuvB hexamer acts as an ATP-dependent pump, pulling dsDNA into and through the RuvAB complex. HJ branch migration allows RuvC to scan DNA until it finds its consensus sequence, where it cleaves and resolves the cruciform DNA. In Azoarcus sp. (strain BH72), this protein is Holliday junction branch migration complex subunit RuvA.